Consider the following 155-residue polypeptide: Cytochrome c-type biogenesis protein CcmE (155 aa).

The Cytoplasmic portion of the chain corresponds to 1-8; that stretch reads MHPKRKQR. Residues 9 to 29 form a helical; Signal-anchor for type II membrane protein membrane-spanning segment; that stretch reads LILVLFVVLVSSVGVSLTLYA. Topologically, residues 30-155 are periplasmic; sequence LNENINLFYP…KTCKGISYDS (126 aa). Heme-binding residues include His-124 and Tyr-128.

The protein belongs to the CcmE/CycJ family.

Its subcellular location is the cell inner membrane. Heme chaperone required for the biogenesis of c-type cytochromes. Transiently binds heme delivered by CcmC and transfers the heme to apo-cytochromes in a process facilitated by CcmF and CcmH. This Teredinibacter turnerae (strain ATCC 39867 / T7901) protein is Cytochrome c-type biogenesis protein CcmE.